Consider the following 466-residue polypeptide: Argininosuccinate lyase (466 aa).

This sequence belongs to the lyase 1 family. Argininosuccinate lyase subfamily.

It localises to the cytoplasm. The enzyme catalyses 2-(N(omega)-L-arginino)succinate = fumarate + L-arginine. The protein operates within amino-acid biosynthesis; L-arginine biosynthesis; L-arginine from L-ornithine and carbamoyl phosphate: step 3/3. The polypeptide is Argininosuccinate lyase (Desulfovibrio desulfuricans (strain ATCC 27774 / DSM 6949 / MB)).